Consider the following 83-residue polypeptide: Cytochrome b559 subunit alpha (83 aa).

The chain crosses the membrane as a helical span at residues 21–35 (VIHSITIPSLFIAGW). A heme-binding site is contributed by histidine 23.

It belongs to the PsbE/PsbF family. Heterodimer of an alpha subunit and a beta subunit. PSII is composed of 1 copy each of membrane proteins PsbA, PsbB, PsbC, PsbD, PsbE, PsbF, PsbH, PsbI, PsbJ, PsbK, PsbL, PsbM, PsbT, PsbX, PsbY, PsbZ, Psb30/Ycf12, at least 3 peripheral proteins of the oxygen-evolving complex and a large number of cofactors. It forms dimeric complexes. Heme b serves as cofactor.

The protein resides in the plastid. The protein localises to the chloroplast thylakoid membrane. This b-type cytochrome is tightly associated with the reaction center of photosystem II (PSII). PSII is a light-driven water:plastoquinone oxidoreductase that uses light energy to abstract electrons from H(2)O, generating O(2) and a proton gradient subsequently used for ATP formation. It consists of a core antenna complex that captures photons, and an electron transfer chain that converts photonic excitation into a charge separation. In Liriodendron tulipifera (Tuliptree), this protein is Cytochrome b559 subunit alpha.